A 169-amino-acid chain; its full sequence is Peptide methionine sulfoxide reductase MsrA (169 aa).

Cys-10 is an active-site residue.

Belongs to the MsrA Met sulfoxide reductase family.

The catalysed reaction is L-methionyl-[protein] + [thioredoxin]-disulfide + H2O = L-methionyl-(S)-S-oxide-[protein] + [thioredoxin]-dithiol. It catalyses the reaction [thioredoxin]-disulfide + L-methionine + H2O = L-methionine (S)-S-oxide + [thioredoxin]-dithiol. In terms of biological role, has an important function as a repair enzyme for proteins that have been inactivated by oxidation. Catalyzes the reversible oxidation-reduction of methionine sulfoxide in proteins to methionine. The chain is Peptide methionine sulfoxide reductase MsrA from Streptococcus uberis (strain ATCC BAA-854 / 0140J).